Reading from the N-terminus, the 432-residue chain is Adenylosuccinate synthetase (432 aa).

GTP is bound by residues 13 to 19 (GDEGKGK) and 41 to 43 (GHT). Residue Asp14 is the Proton acceptor of the active site. Asp14 and Gly41 together coordinate Mg(2+). IMP-binding positions include 14 to 17 (DEGK), 39 to 42 (NAGH), Thr130, Arg144, Gln225, Thr240, and Arg304. The Proton donor role is filled by His42. 300–306 (ATTGRKR) provides a ligand contact to substrate. GTP-binding positions include Arg306, 332–334 (KLD), and 415–417 (STG).

Belongs to the adenylosuccinate synthetase family. Homodimer. Mg(2+) is required as a cofactor.

It is found in the cytoplasm. The enzyme catalyses IMP + L-aspartate + GTP = N(6)-(1,2-dicarboxyethyl)-AMP + GDP + phosphate + 2 H(+). Its pathway is purine metabolism; AMP biosynthesis via de novo pathway; AMP from IMP: step 1/2. In terms of biological role, plays an important role in the de novo pathway of purine nucleotide biosynthesis. Catalyzes the first committed step in the biosynthesis of AMP from IMP. This chain is Adenylosuccinate synthetase, found in Vibrio cholerae serotype O1 (strain M66-2).